Here is a 412-residue protein sequence, read N- to C-terminus: Peptide chain release factor subunit 1 (412 aa).

It belongs to the eukaryotic release factor 1 family. In terms of assembly, heterodimer of two subunits, one of which binds GTP.

The protein localises to the cytoplasm. Its function is as follows. Directs the termination of nascent peptide synthesis (translation) in response to the termination codons UAA, UAG and UGA. The sequence is that of Peptide chain release factor subunit 1 from Methanobrevibacter smithii (strain ATCC 35061 / DSM 861 / OCM 144 / PS).